The following is a 625-amino-acid chain: Chaperone protein HtpG (625 aa).

An a; substrate-binding region spans residues 1–332; that stretch reads MSNKQNTAVQ…TEDLSLNVSR (332 aa). A b region spans residues 333–545; the sequence is EIVQSSPVMS…KDAMDSQMER (213 aa). The tract at residues 546-625 is c; that stretch reads MMKMMQQEMP…ELIEAATLSR (80 aa).

This sequence belongs to the heat shock protein 90 family. In terms of assembly, homodimer.

The protein localises to the cytoplasm. Molecular chaperone. Has ATPase activity. The sequence is that of Chaperone protein HtpG from Chlorobium luteolum (strain DSM 273 / BCRC 81028 / 2530) (Pelodictyon luteolum).